The following is a 241-amino-acid chain: Superoxide dismutase [Mn] 2, mitochondrial (241 aa).

Mn(2+) contacts are provided by His-60, His-108, Asp-197, and His-201.

It belongs to the iron/manganese superoxide dismutase family. In terms of assembly, homotetramer. Requires Mn(2+) as cofactor.

It localises to the mitochondrion matrix. It carries out the reaction 2 superoxide + 2 H(+) = H2O2 + O2. Destroys superoxide anion radicals which are normally produced within the cells and which are toxic to biological systems. The sequence is that of Superoxide dismutase [Mn] 2, mitochondrial (MSD2) from Arabidopsis thaliana (Mouse-ear cress).